Consider the following 1005-residue polypeptide: Helicase-like transcription factor (1005 aa).

Arg-27 is subject to Omega-N-methylarginine. The DNA-binding element occupies 38-287; it reads EFQDIIPPDD…FSEKDQPENV (250 aa). Residue Lys-112 forms a Glycyl lysine isopeptide (Lys-Gly) (interchain with G-Cter in SUMO2) linkage. A Phosphotyrosine; by JAK2 modification is found at Tyr-195. A Glycyl lysine isopeptide (Lys-Gly) (interchain with G-Cter in SUMO2) cross-link involves residue Lys-211. 294-301 lines the ATP pocket; it reads DDMGLGKT. Positions 325–361 are enriched in basic and acidic residues; sequence KNQVKKECNSSESDKPGRKDTIKKTDGLSKEGSRYSE. The tract at residues 325–385 is disordered; the sequence is KNQVKKECNS…SELSSSQPKR (61 aa). Positions 373-382 are enriched in polar residues; that stretch reads YSMSELSSSQ. Ser-395, Ser-396, and Ser-398 each carry phosphoserine. Residues 427–603 form the Helicase ATP-binding domain; sequence GPSKIKEDTA…WSLLSFLKLK (177 aa). Positions 554–557 match the DEGH box motif; that stretch reads DEGH. Thr-733 bears the Phosphothreonine mark. An RING-type zinc finger spans residues 757–798; the sequence is CAICLDSLTVPVITHCAHVFCKPCICQCIQNEQPHAKCPLCR. Required for interaction with the RFBP isoform of ATP11B regions lie at residues 767 to 772 and 791 to 796; these read PVITHC and HAKCPL. The region spanning 834-999 is the Helicase C-terminal domain; the sequence is ALMHALIDLR…EMKQAKINEI (166 aa). The tract at residues 922–1005 is interaction with SP1 and SP3; the sequence is SRVFLMDPAW…INEIRTLIDL (84 aa).

Belongs to the SNF2/RAD54 helicase family. RAD16 subfamily. In terms of assembly, interacts with SP1 and SP3 independently of DNA; the interaction with these transcriptional factors may be required for basal transcription of target genes. Interacts (via the RING-finger) with isoform RFBP of ATP11B. Progesterone-dependent isoform 1 interacts with EGR1; the interaction requires prior binding to DNA and represses c-Rel via a DNA looping mechanism. Interacts with GATA4. Interacts with PCNA; the interaction promotes polyubiquitination of PCNA through association with the UBE2B-RAD18 and UBE2V2-UBE2N ubiquitin ligase complexes. Interacts with RAD18, SHPRH, UBE2V2 and UBE2N. Phosphorylated on serine, threonine, and tyrosine residues. Tyr-195 phosphorylation is catalyzed by JAK2 in response to prolactin treatment. It is required for DNA binding. Isoform 1 is expressed preferentially in bladder, cervix, diaphragm, duodenum, epididymis, heart, kidney, liver, lung, ovary (granulosa cells), prostate, spleen, testis (predominantly in the Sertoli cells of the seminiferous tubules) and vagina. Isoform 2 is expressed preferentially in lactating mammary gland and uterine endometrium.

It is found in the cytoplasm. The protein resides in the nucleus. It localises to the nucleolus. The protein localises to the nucleoplasm. The enzyme catalyses S-ubiquitinyl-[E2 ubiquitin-conjugating enzyme]-L-cysteine + [acceptor protein]-L-lysine = [E2 ubiquitin-conjugating enzyme]-L-cysteine + N(6)-ubiquitinyl-[acceptor protein]-L-lysine.. It functions in the pathway protein modification; protein ubiquitination. Functionally, has both helicase and E3 ubiquitin ligase activities. Possesses intrinsic ATP-dependent nucleosome-remodeling activity. This activity may be required for transcriptional activation or repression of specific target promoters. These may include the SERPINE1, to which this protein can bind directly. Mediates repression by c-Rel through a DNA-looping mechanism. Plays a role in error-free postreplication repair (PRR) of damaged DNA and maintains genomic stability through acting as a ubiquitin ligase for 'Lys-63'-linked polyubiquitination of chromatin-bound PCNA. Transcriptional regulator that mediates the ability of prolactin to augment progesterone-dependent transcription of the SCGB1A1/uteroglobin gene through a bipartite progesterone receptor half-site/overlapping Y-box combination (-38/-26) where progesterone activation is attenuated by nuclear factor Y binding. Regulation also involves two GC-rich sequences in the proximal promoter (positions -162/+90) and a RUSH/SMARCA3 site (positions -616/-611) in the 5'-untranslated region. This Oryctolagus cuniculus (Rabbit) protein is Helicase-like transcription factor (HLTF).